Consider the following 355-residue polypeptide: UDP-N-acetylglucosamine--N-acetylmuramyl-(pentapeptide) pyrophosphoryl-undecaprenol N-acetylglucosamine transferase (355 aa).

UDP-N-acetyl-alpha-D-glucosamine contacts are provided by residues 7-9 (TGG), asparagine 119, arginine 159, serine 187, isoleucine 241, and glutamine 286.

The protein belongs to the glycosyltransferase 28 family. MurG subfamily.

The protein localises to the cell inner membrane. The enzyme catalyses di-trans,octa-cis-undecaprenyl diphospho-N-acetyl-alpha-D-muramoyl-L-alanyl-D-glutamyl-meso-2,6-diaminopimeloyl-D-alanyl-D-alanine + UDP-N-acetyl-alpha-D-glucosamine = di-trans,octa-cis-undecaprenyl diphospho-[N-acetyl-alpha-D-glucosaminyl-(1-&gt;4)]-N-acetyl-alpha-D-muramoyl-L-alanyl-D-glutamyl-meso-2,6-diaminopimeloyl-D-alanyl-D-alanine + UDP + H(+). It functions in the pathway cell wall biogenesis; peptidoglycan biosynthesis. In terms of biological role, cell wall formation. Catalyzes the transfer of a GlcNAc subunit on undecaprenyl-pyrophosphoryl-MurNAc-pentapeptide (lipid intermediate I) to form undecaprenyl-pyrophosphoryl-MurNAc-(pentapeptide)GlcNAc (lipid intermediate II). This Nitrosomonas eutropha (strain DSM 101675 / C91 / Nm57) protein is UDP-N-acetylglucosamine--N-acetylmuramyl-(pentapeptide) pyrophosphoryl-undecaprenol N-acetylglucosamine transferase.